The sequence spans 521 residues: Bifunctional purine biosynthesis protein PurH (521 aa).

The 145-residue stretch at 1 to 145 folds into the MGS-like domain; that stretch reads MIKQALISVS…KNHRDVTVVV (145 aa).

The protein belongs to the PurH family.

It catalyses the reaction (6R)-10-formyltetrahydrofolate + 5-amino-1-(5-phospho-beta-D-ribosyl)imidazole-4-carboxamide = 5-formamido-1-(5-phospho-D-ribosyl)imidazole-4-carboxamide + (6S)-5,6,7,8-tetrahydrofolate. The catalysed reaction is IMP + H2O = 5-formamido-1-(5-phospho-D-ribosyl)imidazole-4-carboxamide. The protein operates within purine metabolism; IMP biosynthesis via de novo pathway; 5-formamido-1-(5-phospho-D-ribosyl)imidazole-4-carboxamide from 5-amino-1-(5-phospho-D-ribosyl)imidazole-4-carboxamide (10-formyl THF route): step 1/1. It participates in purine metabolism; IMP biosynthesis via de novo pathway; IMP from 5-formamido-1-(5-phospho-D-ribosyl)imidazole-4-carboxamide: step 1/1. In Burkholderia cenocepacia (strain HI2424), this protein is Bifunctional purine biosynthesis protein PurH.